A 144-amino-acid chain; its full sequence is D-aminoacyl-tRNA deacylase (144 aa).

The short motif at 136-137 (GP) is the Gly-cisPro motif, important for rejection of L-amino acids element.

The protein belongs to the DTD family. As to quaternary structure, homodimer.

The protein localises to the cytoplasm. It catalyses the reaction glycyl-tRNA(Ala) + H2O = tRNA(Ala) + glycine + H(+). The catalysed reaction is a D-aminoacyl-tRNA + H2O = a tRNA + a D-alpha-amino acid + H(+). In terms of biological role, an aminoacyl-tRNA editing enzyme that deacylates mischarged D-aminoacyl-tRNAs. Also deacylates mischarged glycyl-tRNA(Ala), protecting cells against glycine mischarging by AlaRS. Acts via tRNA-based rather than protein-based catalysis; rejects L-amino acids rather than detecting D-amino acids in the active site. By recycling D-aminoacyl-tRNA to D-amino acids and free tRNA molecules, this enzyme counteracts the toxicity associated with the formation of D-aminoacyl-tRNA entities in vivo and helps enforce protein L-homochirality. This is D-aminoacyl-tRNA deacylase from Vibrio atlanticus (strain LGP32) (Vibrio splendidus (strain Mel32)).